We begin with the raw amino-acid sequence, 159 residues long: Small ribosomal subunit protein uS17x (159 aa).

This sequence belongs to the universal ribosomal protein uS17 family.

It localises to the cytoplasm. In Arabidopsis thaliana (Mouse-ear cress), this protein is Small ribosomal subunit protein uS17x (RPS11C).